A 1404-amino-acid polypeptide reads, in one-letter code: DNA-directed RNA polymerase subunit beta' (1404 aa).

Positions 70, 72, 85, and 88 each coordinate Zn(2+). 3 residues coordinate Mg(2+): aspartate 460, aspartate 462, and aspartate 464. Zn(2+) is bound by residues cysteine 814, cysteine 888, cysteine 895, and cysteine 898.

It belongs to the RNA polymerase beta' chain family. As to quaternary structure, the RNAP catalytic core consists of 2 alpha, 1 beta, 1 beta' and 1 omega subunit. When a sigma factor is associated with the core the holoenzyme is formed, which can initiate transcription. Requires Mg(2+) as cofactor. Zn(2+) serves as cofactor.

The enzyme catalyses RNA(n) + a ribonucleoside 5'-triphosphate = RNA(n+1) + diphosphate. Its function is as follows. DNA-dependent RNA polymerase catalyzes the transcription of DNA into RNA using the four ribonucleoside triphosphates as substrates. In Shewanella piezotolerans (strain WP3 / JCM 13877), this protein is DNA-directed RNA polymerase subunit beta'.